Reading from the N-terminus, the 112-residue chain is Putative pterin-4-alpha-carbinolamine dehydratase (112 aa).

The protein belongs to the pterin-4-alpha-carbinolamine dehydratase family.

The enzyme catalyses (4aS,6R)-4a-hydroxy-L-erythro-5,6,7,8-tetrahydrobiopterin = (6R)-L-erythro-6,7-dihydrobiopterin + H2O. This chain is Putative pterin-4-alpha-carbinolamine dehydratase, found in Shewanella putrefaciens (strain CN-32 / ATCC BAA-453).